The sequence spans 198 residues: Carnitine operon protein CaiE (198 aa).

The disordered stretch occupies residues 174 to 198 (KPLTQAEENRPRLKGTTDVKPKSAQ). The segment covering 180 to 198 (EENRPRLKGTTDVKPKSAQ) has biased composition (basic and acidic residues).

The protein belongs to the transferase hexapeptide repeat family.

The protein operates within amine and polyamine metabolism; carnitine metabolism. In terms of biological role, overproduction of CaiE stimulates the activity of CaiB and CaiD. The sequence is that of Carnitine operon protein CaiE from Salmonella typhimurium (strain LT2 / SGSC1412 / ATCC 700720).